The sequence spans 432 residues: Probable exopolygalacturonase C (432 aa).

A signal peptide spans 1–20 (MPISKGIFLSLLSTLPLALA). 4 N-linked (GlcNAc...) asparagine glycosylation sites follow: N33, N73, N90, and N140. 2 PbH1 repeats span residues 206–227 (GTNI…AVGS) and 229–250 (SHDI…SIGS). Residue D220 is the Proton donor of the active site. H244 is a catalytic residue. An N-linked (GlcNAc...) asparagine glycan is attached at N260. The stretch at 261–282 (ITNLRFEDVTVIDALYAARFKS) is one PbH1 3 repeat. Residues N292 and N302 are each glycosylated (N-linked (GlcNAc...) asparagine). An intrachain disulfide couples C377 to C383. N407 is a glycosylation site (N-linked (GlcNAc...) asparagine).

The protein belongs to the glycosyl hydrolase 28 family.

It is found in the secreted. It catalyses the reaction [(1-&gt;4)-alpha-D-galacturonosyl](n) + H2O = alpha-D-galacturonate + [(1-&gt;4)-alpha-D-galacturonosyl](n-1). In terms of biological role, specific in hydrolyzing the terminal glycosidic bond of polygalacturonic acid and oligogalacturonates. This Aspergillus terreus (strain NIH 2624 / FGSC A1156) protein is Probable exopolygalacturonase C (pgxC).